The primary structure comprises 846 residues: Pseudolaratriene synthase, chloroplastic (846 aa).

A chloroplast-targeting transit peptide spans 1-58 (MSRFTSATHGLNLSIKMPISVSQVPSIRSNTSKYELQKLRSTGRSVLQTRRQLAIINM). 3 residues coordinate Mg(2+): aspartate 595, aspartate 599, and aspartate 747. Positions 595–599 (DDIYD) match the DDXXD motif motif.

This sequence belongs to the terpene synthase family. The cofactor is Mg(2+). As to expression, expressed in young and mature roots. Expressed at low levels in barks.

Its subcellular location is the plastid. It localises to the chloroplast. It carries out the reaction (2E,6E,10E)-geranylgeranyl diphosphate = pseudolaratriene + diphosphate. It functions in the pathway terpene metabolism. Its function is as follows. Converts geranylgeranyl diphosphate to an new 5,7-fused bicyclic diterpene, named pseudolaratriene. Catalyzes the first committed step in pseudolaric acid B (PAB) biosynthesis. PAB exhibits antiproliferative activity by inhibiting microtubule polymerization, and has demonstrated antitumor properties against several cancer types. In Pseudolarix amabilis (Golden larch), this protein is Pseudolaratriene synthase, chloroplastic.